A 289-amino-acid chain; its full sequence is Ribosomal RNA small subunit methyltransferase A (289 aa).

Residues Asn28, Leu30, Gly55, Glu77, Asp103, and Asn122 each coordinate S-adenosyl-L-methionine.

Belongs to the class I-like SAM-binding methyltransferase superfamily. rRNA adenine N(6)-methyltransferase family. RsmA subfamily.

Its subcellular location is the cytoplasm. The enzyme catalyses adenosine(1518)/adenosine(1519) in 16S rRNA + 4 S-adenosyl-L-methionine = N(6)-dimethyladenosine(1518)/N(6)-dimethyladenosine(1519) in 16S rRNA + 4 S-adenosyl-L-homocysteine + 4 H(+). Functionally, specifically dimethylates two adjacent adenosines (A1518 and A1519) in the loop of a conserved hairpin near the 3'-end of 16S rRNA in the 30S particle. May play a critical role in biogenesis of 30S subunits. The sequence is that of Ribosomal RNA small subunit methyltransferase A from Jannaschia sp. (strain CCS1).